A 432-amino-acid polypeptide reads, in one-letter code: Adenylosuccinate synthetase (432 aa).

GTP-binding positions include Gly-12 to Lys-18 and Gly-40 to Thr-42. Asp-13 serves as the catalytic Proton acceptor. 2 residues coordinate Mg(2+): Asp-13 and Gly-40. IMP is bound by residues Asp-13–Lys-16, Asn-38–His-41, Thr-132, Arg-146, Gln-226, Thr-241, and Arg-305. His-41 functions as the Proton donor in the catalytic mechanism. Thr-301 to Arg-307 serves as a coordination point for substrate. Residues Arg-307, Lys-333–Asp-335, and Ser-415–Ser-417 each bind GTP.

It belongs to the adenylosuccinate synthetase family. Homodimer. Mg(2+) serves as cofactor.

It is found in the cytoplasm. It catalyses the reaction IMP + L-aspartate + GTP = N(6)-(1,2-dicarboxyethyl)-AMP + GDP + phosphate + 2 H(+). It functions in the pathway purine metabolism; AMP biosynthesis via de novo pathway; AMP from IMP: step 1/2. In terms of biological role, plays an important role in the de novo pathway of purine nucleotide biosynthesis. Catalyzes the first committed step in the biosynthesis of AMP from IMP. The chain is Adenylosuccinate synthetase from Allorhizobium ampelinum (strain ATCC BAA-846 / DSM 112012 / S4) (Agrobacterium vitis (strain S4)).